A 147-amino-acid chain; its full sequence is Hemoglobin subunit beta (147 aa).

V2 carries the N-acetylvaline modification. A Globin domain is found at 3 to 147 (HLSAEEKGHI…VATALAHKYH (145 aa)). K60 carries the post-translational modification N6-acetyllysine. Residue H64 participates in heme b binding. An N6-acetyllysine modification is found at K83. H93 contributes to the heme b binding site. C94 is modified (S-nitrosocysteine). At K145 the chain carries N6-acetyllysine.

This sequence belongs to the globin family. Heterotetramer of two alpha chains and two beta chains. As to expression, red blood cells.

Its function is as follows. Involved in oxygen transport from the lung to the various peripheral tissues. In Sminthopsis crassicaudata (Fat-tailed dunnart), this protein is Hemoglobin subunit beta (HBB).